Consider the following 332-residue polypeptide: MATDFKSLPVIDISRLLLKCDDPDMAEDVGVAEVVQQLDKACRDAGFFYVIGHGISEDVINKVREITREFFKLPYEEKLKIKMTPAAGYRGYQRIGENVTKGIPDIHEAIDCYREIKQGKYGDIGKVMEGPNQWPENPQEFKELMEEYIKLCTDLSRKILRGISLALAGSPYEFEGKMAGDPFWVMRLIGYPGAEFTNGQPENDIGCGAHTDYGLLTLVNQDDDKTALQVRNLGGEWISAIPIPGSFVCNIGDMLKILSNGVYESTLHRVINNSPQYRVCVAFFYETNFDAVVEPLDICKQKYPGGRGGCQVFKRAVYGEHLVSKVQTNFAM.

The Fe2OG dioxygenase domain occupies 182–287 (PFWVMRLIGY…RVCVAFFYET (106 aa)). Residues histidine 210, aspartate 212, and histidine 268 each contribute to the Fe cation site. Arginine 278 is a 2-oxoglutarate binding site.

This sequence belongs to the iron/ascorbate-dependent oxidoreductase family. Fe(2+) is required as a cofactor.

It is found in the cytoplasm. Its subcellular location is the cytosol. The enzyme catalyses L-homoarginine + 2-oxoglutarate + O2 = 6-hydroxy-L-homoarginine + succinate + CO2. Slightly inhibited by canavanine (Can), the 5-oxa-analog of arginine. In terms of biological role, 2-oxoglutarate-dependent dioxygenase catalyzing homoarginine 6-hydroxylation thus producing 6-hydroxy-L-homoarginine. Guanidine (Gd) is in turn synthesized by the spontaneous conversion of 6-hydroxy-L-homoarginine to (S)-2-amino-6-oxohexanoate (RHEA:79843); guanidine is a nitrogen-rich compound that can serve as a defense or signaling substance. In Arabidopsis thaliana (Mouse-ear cress), this protein is Homoarginine-6-hydroxylase 2-ODD-C23.1.